We begin with the raw amino-acid sequence, 329 residues long: Delta-aminolevulinic acid dehydratase (329 aa).

Zn(2+) is bound by residues cysteine 122, cysteine 124, histidine 131, and cysteine 132. Lysine 199 (schiff-base intermediate with substrate) is an active-site residue. At lysine 199 the chain carries N6-succinyllysine. Arginine 209 serves as a coordination point for 5-aminolevulinate. A Phosphoserine modification is found at serine 215. Arginine 221 is a binding site for 5-aminolevulinate. Residue cysteine 223 participates in Zn(2+) binding. Lysine 252 serves as the catalytic Schiff-base intermediate with substrate. Lysine 252 is modified (N6-succinyllysine). Residues serine 279 and tyrosine 318 each coordinate 5-aminolevulinate.

Belongs to the ALAD family. In terms of assembly, homooctamer; active form. Homohexamer; low activity form. The cofactor is Zn(2+).

Its subcellular location is the cytoplasm. The protein resides in the cytosol. The catalysed reaction is 2 5-aminolevulinate = porphobilinogen + 2 H2O + H(+). Its pathway is porphyrin-containing compound metabolism; protoporphyrin-IX biosynthesis; coproporphyrinogen-III from 5-aminolevulinate: step 1/4. With respect to regulation, can alternate between a fully active homooctamer and a low-activity homohexamer. A bound magnesium ion may promote the assembly of the fully active homooctamer. The magnesium-binding site is absent in the low-activity homohexamer. Inhibited by compounds that favor the hexameric state. Inhibited by divalent lead ions. The lead ions partially displace the zinc cofactor. Catalyzes an early step in the biosynthesis of tetrapyrroles. Binds two molecules of 5-aminolevulinate per subunit, each at a distinct site, and catalyzes their condensation to form porphobilinogen. The sequence is that of Delta-aminolevulinic acid dehydratase (ALAD) from Bos taurus (Bovine).